Consider the following 110-residue polypeptide: Ubiquitin-related modifier 1 (110 aa).

Residue Gly110 is modified to 1-thioglycine. Gly110 participates in a covalent cross-link: Glycyl lysine isopeptide (Gly-Lys) (interchain with K-? in acceptor proteins).

It belongs to the URM1 family. Homodimer; homodimerization may provide an autoprotection to the highly active C-terminal residue before attacking its substrates. Forms a conjugate with the target protein AHP1. C-terminal thiocarboxylation occurs in 2 steps, it is first acyl-adenylated (-COAMP) via the hesA/moeB/thiF part of UBA4, then thiocarboxylated (-COSH) via the rhodanese domain of UBA4.

The protein resides in the cytoplasm. Its pathway is tRNA modification; 5-methoxycarbonylmethyl-2-thiouridine-tRNA biosynthesis. Its function is as follows. Acts as a sulfur carrier required for 2-thiolation of mcm(5)S(2)U at tRNA wobble positions of cytosolic tRNA(Lys), tRNA(Glu) and tRNA(Gln). Serves as sulfur donor in tRNA 2-thiolation reaction by being thiocarboxylated (-COSH) at its C-terminus by the MOCS3 homolog UBA4. The sulfur is then transferred to tRNA to form 2-thiolation of mcm(5)S(2)U. Prior mcm(5) tRNA modification by the elongator complex is required for 2-thiolation. Also acts as a ubiquitin-like protein (UBL) that is covalently conjugated via an isopeptide bond to lysine residues of target proteins such as AHP1. Conjugation does not depend on the canonical cascade of E2 ubiquitin-conjugating enzymes and/or E3 ligases. The conjugation reaction requires a thiocarboxylated C-terminus of URM1 and a peroxidatic cysteine in the target protein, as the sulfur atom of the URM1 thiocarboxyl group is transferred to redox-active cysteine residues in the target protein. Oxidative stress specifically induces the formation of UBL-protein conjugates. Covalent modification with URM1 promotes the phase separation of a wide range of proteins into condensates like stress granules. The chain is Ubiquitin-related modifier 1 from Chaetomium thermophilum (strain DSM 1495 / CBS 144.50 / IMI 039719) (Thermochaetoides thermophila).